We begin with the raw amino-acid sequence, 212 residues long: Eukaryotic translation initiation factor 4E-1 (212 aa).

Cysteine 125 and cysteine 129 are joined by a disulfide.

It belongs to the eukaryotic initiation factor 4E family. In terms of assembly, EIF4F is a multi-subunit complex, the composition of which varies with external and internal environmental conditions. It is composed of at least EIF4A, EIF4E and EIF4G. EIF4E is also known to interact with other partners, including pgl-1. Interacts with ifet-1. As to expression, enriched in the germline from L3 larvae to adults; regions of the gonad undergoing spermatogenesis. Expressed in germ granules (P granules); when associated with pgl-1.

The protein resides in the cytoplasm. Recognizes and binds the 7-methylguanosine-containing mRNA cap during an early step in the initiation of protein synthesis and facilitates ribosome binding by inducing the unwinding of the mRNAs secondary structures. All 5 eIF4E proteins bind monomethyl cap structures. Only ife-1, ife-2 and ife-5 bind trimethyl cap structures which result from trans-splicing. Translation of trimethyl cap structure mRNAs may be regulated by intracellular redox state; disulfide bonds change the width and depth of the cap-binding cavity determining selectivity to mRNA caps. Required for progression through meiotic divisions during spermatogenesis and for the production of viable sperm. It is not required during oogenesis. The protein is Eukaryotic translation initiation factor 4E-1 (ife-1) of Caenorhabditis elegans.